A 417-amino-acid chain; its full sequence is Imidazolonepropionase (417 aa).

Residues histidine 80 and histidine 82 each contribute to the Fe(3+) site. Zn(2+) is bound by residues histidine 80 and histidine 82. Residues arginine 89, tyrosine 152, and histidine 187 each contribute to the 4-imidazolone-5-propanoate site. Tyrosine 152 contributes to the N-formimidoyl-L-glutamate binding site. Fe(3+) is bound at residue histidine 252. Residue histidine 252 coordinates Zn(2+). Glutamate 255 provides a ligand contact to 4-imidazolone-5-propanoate. Fe(3+) is bound at residue aspartate 326. Residue aspartate 326 participates in Zn(2+) binding. The N-formimidoyl-L-glutamate site is built by asparagine 328 and glycine 330. Residue serine 331 participates in 4-imidazolone-5-propanoate binding.

This sequence belongs to the metallo-dependent hydrolases superfamily. HutI family. Zn(2+) is required as a cofactor. The cofactor is Fe(3+).

Its subcellular location is the cytoplasm. It catalyses the reaction 4-imidazolone-5-propanoate + H2O = N-formimidoyl-L-glutamate. It participates in amino-acid degradation; L-histidine degradation into L-glutamate; N-formimidoyl-L-glutamate from L-histidine: step 3/3. Its function is as follows. Catalyzes the hydrolytic cleavage of the carbon-nitrogen bond in imidazolone-5-propanoate to yield N-formimidoyl-L-glutamate. It is the third step in the universal histidine degradation pathway. The sequence is that of Imidazolonepropionase from Bacteroides fragilis (strain YCH46).